A 657-amino-acid chain; its full sequence is Probable Xaa-Pro aminopeptidase P (657 aa).

Mn(2+)-binding residues include aspartate 453, aspartate 464, glutamate 562, and glutamate 576.

It belongs to the peptidase M24B family. It depends on Mn(2+) as a cofactor.

It carries out the reaction Release of any N-terminal amino acid, including proline, that is linked to proline, even from a dipeptide or tripeptide.. Its function is as follows. Catalyzes the removal of a penultimate prolyl residue from the N-termini of peptides. This chain is Probable Xaa-Pro aminopeptidase P (ampp), found in Talaromyces marneffei (strain ATCC 18224 / CBS 334.59 / QM 7333) (Penicillium marneffei).